Here is a 1023-residue protein sequence, read N- to C-terminus: Probable beta-glucosidase E (1023 aa).

The segment at 1 to 51 (MPKSYTPVHDSIPEEDHFSSDDESNFRLHRIDRSASRSQSPKENEGEPSIL) is disordered. Residues 1–128 (MPKSYTPVHD…AVYYSKTWWR (128 aa)) lie on the Cytoplasmic side of the membrane. The span at 11 to 45 (SIPEEDHFSSDDESNFRLHRIDRSASRSQSPKENE) shows a compositional bias: basic and acidic residues. Residues 129–149 (TLVVVIIALGLLVWGFLKYAS) form a helical; Signal-anchor for type II membrane protein membrane-spanning segment. At 150-1023 (TRGDIWEEYD…NLPLGKPFDP (874 aa)) the chain is on the extracellular side. Asn-199 and Asn-387 each carry an N-linked (GlcNAc...) asparagine glycan. The active site involves Asp-415. Residues Asn-458 and Asn-497 are each glycosylated (N-linked (GlcNAc...) asparagine). Disordered regions lie at residues 485–515 (WESP…GSPG) and 822–841 (NPSR…PSYD). The segment covering 827 to 838 (PAARPPDAVAPP) has biased composition (low complexity). Asn-848 carries an N-linked (GlcNAc...) asparagine glycan. Residues 873–909 (ATTPPPPNPEASGSATDQKPHRTKPSDAGGGAGGNPS) form a disordered region. Asn-964 and Asn-979 each carry an N-linked (GlcNAc...) asparagine glycan.

This sequence belongs to the glycosyl hydrolase 3 family.

It is found in the cell membrane. The enzyme catalyses Hydrolysis of terminal, non-reducing beta-D-glucosyl residues with release of beta-D-glucose.. It participates in glycan metabolism; cellulose degradation. In terms of biological role, beta-glucosidases are one of a number of cellulolytic enzymes involved in the degradation of cellulosic biomass. Catalyzes the last step releasing glucose from the inhibitory cellobiose. The sequence is that of Probable beta-glucosidase E (bglE) from Emericella nidulans (strain FGSC A4 / ATCC 38163 / CBS 112.46 / NRRL 194 / M139) (Aspergillus nidulans).